We begin with the raw amino-acid sequence, 444 residues long: Protein giant-lens (444 aa).

The N-terminal stretch at 1–24 (MPTTLMLLPCMLLLLLTAAAVAVG) is a signal peptide. Two-fingered domain 1 part repeat units follow at residues 123 to 165 (RDVR…CRCP) and 285 to 307 (CPSSLGVEDGHTIADKTRHYKMC). 8 disulfide bridges follow: Cys-141/Cys-162, Cys-147/Cys-285, Cys-164/Cys-307, Cys-316/Cys-341, Cys-343/Cys-370, Cys-378/Cys-405, Cys-384/Cys-413, and Cys-407/Cys-440. Two-fingered domain repeat units follow at residues 316–370 (CTHF…LFAC) and 378–444 (CQRK…MAND). The N-linked (GlcNAc...) asparagine glycan is linked to Asn-333.

Interacts with spi. In terms of tissue distribution, during embryogenesis, expression is in a segmental pattern in the ectoderm and in the nervous system. In the eye imaginal disks, expression in photoreceptor cells begins a few rows posterior to the morphogenetic furrow. Also expressed in the wing disk. In the adult, expression is seen in the retina and lamina.

The protein localises to the secreted. Regulates cell determination; development of ommatidia and optic lobe. Is a signaling molecule involved in the process of axon pathfinding in the eye. Part of the Ras pathway regulating programmed cell death in pupal eyes; activated by lozenge (lz). Antagonist for the Egfr receptor (gurken). Inhibits Egfr signaling without interacting directly with the receptor, but instead by sequestering the Egfr-activating ligand spitz (spi). The protein is Protein giant-lens (aos) of Drosophila melanogaster (Fruit fly).